The following is a 260-amino-acid chain: Thymidylate synthase (260 aa).

Arginine 21 provides a ligand contact to dUMP. (6R)-5,10-methylene-5,6,7,8-tetrahydrofolate is bound at residue histidine 51. Residue 122–123 participates in dUMP binding; the sequence is RR. The Nucleophile role is filled by cysteine 142. Residues 162-165, asparagine 173, and 203-205 each bind dUMP; these read RSAD and HLY. Position 165 (aspartate 165) interacts with (6R)-5,10-methylene-5,6,7,8-tetrahydrofolate. Alanine 259 is a binding site for (6R)-5,10-methylene-5,6,7,8-tetrahydrofolate.

It belongs to the thymidylate synthase family. Bacterial-type ThyA subfamily. Homodimer.

The protein localises to the cytoplasm. It carries out the reaction dUMP + (6R)-5,10-methylene-5,6,7,8-tetrahydrofolate = 7,8-dihydrofolate + dTMP. It participates in pyrimidine metabolism; dTTP biosynthesis. Catalyzes the reductive methylation of 2'-deoxyuridine-5'-monophosphate (dUMP) to 2'-deoxythymidine-5'-monophosphate (dTMP) while utilizing 5,10-methylenetetrahydrofolate (mTHF) as the methyl donor and reductant in the reaction, yielding dihydrofolate (DHF) as a by-product. This enzymatic reaction provides an intracellular de novo source of dTMP, an essential precursor for DNA biosynthesis. This is Thymidylate synthase from Methylococcus capsulatus (strain ATCC 33009 / NCIMB 11132 / Bath).